The sequence spans 371 residues: Homoserine O-acetyltransferase (371 aa).

In terms of domain architecture, AB hydrolase-1 spans 44 to 350; the sequence is NAILVEHAWT…SYGHDAFLLE (307 aa). Serine 150 acts as the Nucleophile in catalysis. Arginine 217 contacts substrate. Catalysis depends on residues aspartate 311 and histidine 344. Aspartate 345 lines the substrate pocket.

Belongs to the AB hydrolase superfamily. MetX family. As to quaternary structure, homodimer.

The protein resides in the cytoplasm. It carries out the reaction L-homoserine + acetyl-CoA = O-acetyl-L-homoserine + CoA. Its pathway is amino-acid biosynthesis; L-methionine biosynthesis via de novo pathway; O-acetyl-L-homoserine from L-homoserine: step 1/1. Transfers an acetyl group from acetyl-CoA to L-homoserine, forming acetyl-L-homoserine. This chain is Homoserine O-acetyltransferase, found in Pelobacter propionicus (strain DSM 2379 / NBRC 103807 / OttBd1).